A 422-amino-acid polypeptide reads, in one-letter code: Serine protease HTRA2, mitochondrial (422 aa).

The transit peptide at 1–17 (MALRGSHRLEVIFKRCI) directs the protein to the mitochondrion. The propeptide occupies 18-74 (ASPVFHSHAANRRSSQLAIKGTDPSSNGNSGQDQQNGEQKAKGWRRLVRFFVPFSLG). The segment covering 29 to 55 (RRSSQLAIKGTDPSSNGNSGQDQQNGE) has biased composition (polar residues). Residues 29 to 56 (RRSSQLAIKGTDPSSNGNSGQDQQNGEQ) form a disordered region. The chain crosses the membrane as a helical span at residues 64 to 82 (LVRFFVPFSLGAAVSAAVI). 2 short sequence motifs (IAP-binding) span residues 75-78 (AAVS) and 94-97 (SKMT). A serine protease region spans residues 139-302 (SNGSGFIIEQ…IPIDYVKVFL (164 aa)). Catalysis depends on charge relay system residues His-157, Asp-189, and Ser-266. The 86-residue stretch at 325-410 (MGITMLTLTP…NLDIVILRGV (86 aa)) folds into the PDZ domain.

The protein belongs to the peptidase S1C family. As to quaternary structure, interacts with th/DIAP1 (via BIR 2 domain).

The protein localises to the mitochondrion intermembrane space. The protein resides in the mitochondrion membrane. It carries out the reaction Cleavage of non-polar aliphatic amino-acids at the P1 position, with a preference for Val, Ile and Met. At the P2 and P3 positions, Arg is selected most strongly with a secondary preference for other hydrophilic residues.. In terms of biological role, serine protease that shows proteolytic activity against a non-specific substrate beta-casein. Promotes or induces cell death either by direct binding to and inhibition of BIRC proteins (also called inhibitor of apoptosis proteins, IAPs), leading to an increase in caspase activity, or by a BIRC inhibition-independent, caspase-independent and serine protease activity-dependent mechanism. Can antagonize antiapoptotic activity of th/Diap1 by directly inducing the degradation of th/Diap1. The protein is Serine protease HTRA2, mitochondrial of Drosophila yakuba (Fruit fly).